The primary structure comprises 1153 residues: AP-3 complex subunit delta-1 (1153 aa).

Residue Ala-2 is modified to N-acetylalanine. HEAT repeat units lie at residues 34–71 (KYISQCIDEIKQELKQDNIAVKANAVCKLTYLQMLGYD), 77–114 (FNIIEVMSASKFTFKRIGYLAASQSFHEGTDVIMLTTN), 142–179 (DLARDLANDIMTLMSHTKPYIRKKAVLIMYKVFLKYPE), 180–216 (SLRPAFPRLKEKLEDPDPGVQSAAVNVICELARRNPK), 254–292 (RLGKKLIEPLTNLIHSTSAMSLLYECVNTVIAVLISLSS), 299–336 (ASIQLCVQKLRILIEDSDQNLKYLGLLAMSKILKTHPK), 338–373 (VQSHKDLILQCLDDKDESIRLRALDLLYGMVSKKNL), 375–409 (EIVKKLMTHVDKAEGTTYRDELLTKIIDICSQSNY), 431–468 (TRHGHLIAAQMLDVAIRVKAIRKFAVSQMSALLDSAHL), 497–535 (QEPHHTLEAMLRPRVTTLPGHIQAVYVQNVVKLYASILQ), and 548–585 (AVTQLMVDRLPQFVQSADLEVQERASCILQLVKHIQKL). 2 disordered regions span residues 629–696 (EPLS…YQDT) and 726–920 (KLEE…PPES). Ser-632, Ser-634, Ser-636, and Ser-658 each carry phosphoserine. The segment covering 639–675 (ERPRAVFHEEEQRRPKHRPSEADEEELARRREARKQE) has biased composition (basic and acidic residues). Residues 659-679 (EADEEELARRREARKQEQANN) are a coiled coil. Ser-688 carries the phosphoserine modification. Positions 725 to 756 (VKLEEERRHRQKLEKDKRRKKRKEKEKKGKRR) form a coiled coil. Residues 726 to 740 (KLEEERRHRQKLEKD) show a composition bias toward basic and acidic residues. Residues 741–758 (KRRKKRKEKEKKGKRRHS) show a composition bias toward basic residues. Phosphoserine occurs at positions 758 and 759. Phosphothreonine is present on Thr-762. 5 positions are modified to phosphoserine: Ser-764, Ala-785, Ser-788, Lys-828, and Ser-829. Residues 777 to 794 (VTEEMPENALPSDEDDKD) are compositionally biased toward acidic residues. Positions 795-839 (PNDPYRALDIDLDKPLADSEKLPIQKHRNTETSKSPEKDVPMVEK) are enriched in basic and acidic residues. Composition is skewed to basic residues over residues 840-853 (KSKKPKKKEKKHKE) and 863-879 (EKEKKKSPKPKKKKHRK). Positions 845–869 (KKKEKKHKEKERDKEKKKEKEKKKS) form a coiled coil. Val-931 carries the post-translational modification Phosphoserine.

The protein belongs to the adaptor complexes large subunit family. As to quaternary structure, AP-3 associates with the BLOC-1 complex. Adaptor protein complex 3 (AP-3) is a heterotetramer composed of two large adaptins (delta-type subunit AP3D1 and beta-type subunit AP3B1 or AP3B2), a medium adaptin (mu-type subunit AP3M1 or AP3M2) and a small adaptin (sigma-type subunit APS1 or AP3S2). Interacts with SLC30A2. Interacts with CLN3 (via dileucine motif); this interaction facilitates lysosomal targeting. Present in all adult tissues examined with the highest levels in skeletal muscle, heart, pancreas and testis.

The protein resides in the cytoplasm. Its subcellular location is the golgi apparatus membrane. In terms of biological role, part of the AP-3 complex, an adaptor-related complex which is not clathrin-associated. The complex is associated with the Golgi region as well as more peripheral structures. It facilitates the budding of vesicles from the Golgi membrane and may be directly involved in trafficking to lysosomes. Involved in process of CD8+ T-cell and NK cell degranulation. In concert with the BLOC-1 complex, AP-3 is required to target cargos into vesicles assembled at cell bodies for delivery into neurites and nerve terminals. The sequence is that of AP-3 complex subunit delta-1 (AP3D1) from Homo sapiens (Human).